We begin with the raw amino-acid sequence, 362 residues long: Alanine racemase (362 aa).

The Proton acceptor; specific for D-alanine role is filled by Lys-33. The residue at position 33 (Lys-33) is an N6-(pyridoxal phosphate)lysine. Arg-129 lines the substrate pocket. Catalysis depends on Tyr-254, which acts as the Proton acceptor; specific for L-alanine. Met-302 provides a ligand contact to substrate.

This sequence belongs to the alanine racemase family. Pyridoxal 5'-phosphate is required as a cofactor.

The enzyme catalyses L-alanine = D-alanine. Its pathway is amino-acid biosynthesis; D-alanine biosynthesis; D-alanine from L-alanine: step 1/1. Catalyzes the interconversion of L-alanine and D-alanine. May also act on other amino acids. The sequence is that of Alanine racemase (alr) from Xylella fastidiosa (strain 9a5c).